The primary structure comprises 361 residues: Phospho-N-acetylmuramoyl-pentapeptide-transferase (361 aa).

Helical transmembrane passes span 25–45 (RGIL…PAVI), 73–93 (TMGG…WGDL), 98–118 (VWLV…DDWI), 139–159 (IFGL…AAIT), 168–188 (IALP…IVGF), 200–220 (GLAI…AYAS), 237–257 (AGEL…FLWF), 264–284 (VFMG…IAVI), 289–309 (MVLV…IIQV), and 339–359 (VIVR…ATLK).

The protein belongs to the glycosyltransferase 4 family. MraY subfamily. The cofactor is Mg(2+).

The protein resides in the cell inner membrane. It carries out the reaction UDP-N-acetyl-alpha-D-muramoyl-L-alanyl-gamma-D-glutamyl-meso-2,6-diaminopimeloyl-D-alanyl-D-alanine + di-trans,octa-cis-undecaprenyl phosphate = di-trans,octa-cis-undecaprenyl diphospho-N-acetyl-alpha-D-muramoyl-L-alanyl-D-glutamyl-meso-2,6-diaminopimeloyl-D-alanyl-D-alanine + UMP. It functions in the pathway cell wall biogenesis; peptidoglycan biosynthesis. Functionally, catalyzes the initial step of the lipid cycle reactions in the biosynthesis of the cell wall peptidoglycan: transfers peptidoglycan precursor phospho-MurNAc-pentapeptide from UDP-MurNAc-pentapeptide onto the lipid carrier undecaprenyl phosphate, yielding undecaprenyl-pyrophosphoryl-MurNAc-pentapeptide, known as lipid I. This Xanthomonas oryzae pv. oryzae (strain MAFF 311018) protein is Phospho-N-acetylmuramoyl-pentapeptide-transferase.